The chain runs to 315 residues: G-box-binding factor 1 (315 aa).

Disordered regions lie at residues 1 to 56 and 93 to 268; these read MGTS…GSPS and MPMP…RDEL. Pro residues predominate over residues 46 to 56; sequence PFFPSPVGSPS. Composition is skewed to polar residues over residues 133–164 and 178–187; these read GSGNDGASHSDESVTAGSSDENDENANQQEQG and ASSQSTTGEI. In terms of domain architecture, bZIP spans 222 to 285; it reads ELKRQKRKQS…DKLKSENNSI (64 aa). The tract at residues 224 to 243 is basic motif; that stretch reads KRQKRKQSNRESARRSRLRK. Positions 249 to 262 are enriched in polar residues; sequence QLQQRVESLSNENQ. The segment at 250 to 285 is leucine-zipper; the sequence is LQQRVESLSNENQSLRDELQRLSSECDKLKSENNSI.

It belongs to the bZIP family. In terms of assembly, monomer and heterodimers with BZIP16 and BZIP68. Interacts with GIP1. Post-translationally, phosphorylated by CK2. As to expression, found in both light and dark grown leaves.

It localises to the nucleus. Functionally, binds to the G-box motif (5'-CCACGTGG-3') of the rbcS-1A gene promoter. G-box and G-box-like motifs are cis-acting elements defined in promoters of certain plant genes which are regulated by such diverse stimuli as light-induction or hormone control. Binds to the G-box motif 5'-CACGTG-3' of LHCB2.4 (At3g27690) promoter. May act as transcriptional activator in light-regulated expression of LHCB2.4. Probably binds DNA as monomer. DNA-binding activity is redox-dependent. This chain is G-box-binding factor 1 (GBF1), found in Arabidopsis thaliana (Mouse-ear cress).